A 363-amino-acid polypeptide reads, in one-letter code: Chorismate synthase (363 aa).

Residues Arg48 and Arg54 each contribute to the NADP(+) site. Residues 125–127, 238–239, Gly278, 293–297, and Arg319 each bind FMN; these read RSS, NA, and KPTSS.

Belongs to the chorismate synthase family. Homotetramer. The cofactor is FMNH2.

The enzyme catalyses 5-O-(1-carboxyvinyl)-3-phosphoshikimate = chorismate + phosphate. Its pathway is metabolic intermediate biosynthesis; chorismate biosynthesis; chorismate from D-erythrose 4-phosphate and phosphoenolpyruvate: step 7/7. Catalyzes the anti-1,4-elimination of the C-3 phosphate and the C-6 proR hydrogen from 5-enolpyruvylshikimate-3-phosphate (EPSP) to yield chorismate, which is the branch point compound that serves as the starting substrate for the three terminal pathways of aromatic amino acid biosynthesis. This reaction introduces a second double bond into the aromatic ring system. This chain is Chorismate synthase, found in Alcanivorax borkumensis (strain ATCC 700651 / DSM 11573 / NCIMB 13689 / SK2).